Here is a 148-residue protein sequence, read N- to C-terminus: Arginine repressor (148 aa).

This sequence belongs to the ArgR family.

It localises to the cytoplasm. It functions in the pathway amino-acid biosynthesis; L-arginine biosynthesis [regulation]. Regulates arginine biosynthesis genes. The chain is Arginine repressor from Koribacter versatilis (strain Ellin345).